A 294-amino-acid polypeptide reads, in one-letter code: 33 kDa chaperonin (294 aa).

2 cysteine pairs are disulfide-bonded: C239–C241 and C272–C275.

Belongs to the HSP33 family. Under oxidizing conditions two disulfide bonds are formed involving the reactive cysteines. Under reducing conditions zinc is bound to the reactive cysteines and the protein is inactive.

It is found in the cytoplasm. Functionally, redox regulated molecular chaperone. Protects both thermally unfolding and oxidatively damaged proteins from irreversible aggregation. Plays an important role in the bacterial defense system toward oxidative stress. The protein is 33 kDa chaperonin of Lacticaseibacillus paracasei (strain ATCC 334 / BCRC 17002 / CCUG 31169 / CIP 107868 / KCTC 3260 / NRRL B-441) (Lactobacillus paracasei).